The primary structure comprises 117 residues: Large ribosomal subunit protein bL20 (117 aa).

Belongs to the bacterial ribosomal protein bL20 family.

Functionally, binds directly to 23S ribosomal RNA and is necessary for the in vitro assembly process of the 50S ribosomal subunit. It is not involved in the protein synthesizing functions of that subunit. The polypeptide is Large ribosomal subunit protein bL20 (Actinobacillus pleuropneumoniae serotype 7 (strain AP76)).